The chain runs to 166 residues: Regulatory protein RecX (166 aa).

The protein belongs to the RecX family.

It is found in the cytoplasm. In terms of biological role, modulates RecA activity. This is Regulatory protein RecX from Salmonella choleraesuis (strain SC-B67).